Consider the following 215-residue polypeptide: Cytidylate kinase (215 aa).

Residue Gly-10 to Thr-18 participates in ATP binding.

It belongs to the cytidylate kinase family. Type 1 subfamily.

The protein localises to the cytoplasm. It catalyses the reaction CMP + ATP = CDP + ADP. The enzyme catalyses dCMP + ATP = dCDP + ADP. The chain is Cytidylate kinase from Bartonella henselae (strain ATCC 49882 / DSM 28221 / CCUG 30454 / Houston 1) (Rochalimaea henselae).